Consider the following 623-residue polypeptide: AFI1-like protein C776.06c (623 aa).

The uDENN domain maps to 5–204 (DYLLTAIFDP…IDNIPKPGSE (200 aa)). In terms of domain architecture, cDENN spans 248–386 (ISNLINTFID…SDATTTMDTK (139 aa)). One can recognise a dDENN domain in the interval 388–476 (LFNNTSPFTP…WSWDNDDEKV (89 aa)).

It belongs to the AFI1/mesA family.

Its subcellular location is the cytoplasm. The protein localises to the cell cortex. It is found in the nucleus. In terms of biological role, involved in polarity establishment. The chain is AFI1-like protein C776.06c from Schizosaccharomyces pombe (strain 972 / ATCC 24843) (Fission yeast).